The following is a 99-amino-acid chain: Protein AC150 (99 aa).

The 59-residue stretch at 38-96 (GFSCYNKPIGVNFPHPTRCDAFYMCVGLNQKLELICPEGFEFDPDVKNCVPISDYGCTA) folds into the Chitin-binding type-2 domain. A disulfide bridge links cysteine 73 with cysteine 86.

Its subcellular location is the host nucleus. The protein resides in the virion. In terms of biological role, plays a role in primary oral infection of the host. The polypeptide is Protein AC150 (Autographa californica nuclear polyhedrosis virus (AcMNPV)).